The sequence spans 334 residues: Glycerol-3-phosphate dehydrogenase [NAD(P)+] (334 aa).

The NADPH site is built by Trp-13, Arg-33, and Lys-106. Sn-glycerol 3-phosphate-binding residues include Lys-106, Gly-137, and Ser-139. Ala-141 provides a ligand contact to NADPH. 5 residues coordinate sn-glycerol 3-phosphate: Lys-192, Asp-245, Ser-255, Arg-256, and Asn-257. Lys-192 functions as the Proton acceptor in the catalytic mechanism. An NADPH-binding site is contributed by Arg-256. Residues Val-280 and Glu-282 each coordinate NADPH.

The protein belongs to the NAD-dependent glycerol-3-phosphate dehydrogenase family.

The protein resides in the cytoplasm. It carries out the reaction sn-glycerol 3-phosphate + NAD(+) = dihydroxyacetone phosphate + NADH + H(+). The enzyme catalyses sn-glycerol 3-phosphate + NADP(+) = dihydroxyacetone phosphate + NADPH + H(+). Its pathway is membrane lipid metabolism; glycerophospholipid metabolism. Functionally, catalyzes the reduction of the glycolytic intermediate dihydroxyacetone phosphate (DHAP) to sn-glycerol 3-phosphate (G3P), the key precursor for phospholipid synthesis. This is Glycerol-3-phosphate dehydrogenase [NAD(P)+] from Chlamydia caviae (strain ATCC VR-813 / DSM 19441 / 03DC25 / GPIC) (Chlamydophila caviae).